The chain runs to 184 residues: UPF0398 protein BCAH820_1652 (184 aa).

The protein belongs to the UPF0398 family.

The protein is UPF0398 protein BCAH820_1652 of Bacillus cereus (strain AH820).